A 405-amino-acid polypeptide reads, in one-letter code: DNA polymerase IV 1 (405 aa).

Residues 23 to 203 form the UmuC domain; sequence IAHIDCDAFY…RPVTTIWGVG (181 aa). 2 residues coordinate Mg(2+): Asp27 and Asp120. Glu121 is an active-site residue.

Belongs to the DNA polymerase type-Y family. As to quaternary structure, monomer. Requires Mg(2+) as cofactor.

The protein resides in the cytoplasm. The enzyme catalyses DNA(n) + a 2'-deoxyribonucleoside 5'-triphosphate = DNA(n+1) + diphosphate. Functionally, poorly processive, error-prone DNA polymerase involved in untargeted mutagenesis. Copies undamaged DNA at stalled replication forks, which arise in vivo from mismatched or misaligned primer ends. These misaligned primers can be extended by PolIV. Exhibits no 3'-5' exonuclease (proofreading) activity. May be involved in translesional synthesis, in conjunction with the beta clamp from PolIII. In Agrobacterium fabrum (strain C58 / ATCC 33970) (Agrobacterium tumefaciens (strain C58)), this protein is DNA polymerase IV 1 (dinB1).